The chain runs to 287 residues: Acetyl-coenzyme A carboxylase carboxyl transferase subunit beta (287 aa).

The region spanning 28–287 (LWKKCPKCEN…ILSLLTNKVA (260 aa)) is the CoA carboxyltransferase N-terminal domain. Zn(2+) is bound by residues Cys-32, Cys-35, Cys-51, and Cys-54. A C4-type zinc finger spans residues 32 to 54 (CPKCENVLYRPELEKNLDVCPKC).

It belongs to the AccD/PCCB family. As to quaternary structure, acetyl-CoA carboxylase is a heterohexamer composed of biotin carboxyl carrier protein (AccB), biotin carboxylase (AccC) and two subunits each of ACCase subunit alpha (AccA) and ACCase subunit beta (AccD). Requires Zn(2+) as cofactor.

It localises to the cytoplasm. It catalyses the reaction N(6)-carboxybiotinyl-L-lysyl-[protein] + acetyl-CoA = N(6)-biotinyl-L-lysyl-[protein] + malonyl-CoA. The protein operates within lipid metabolism; malonyl-CoA biosynthesis; malonyl-CoA from acetyl-CoA: step 1/1. Functionally, component of the acetyl coenzyme A carboxylase (ACC) complex. Biotin carboxylase (BC) catalyzes the carboxylation of biotin on its carrier protein (BCCP) and then the CO(2) group is transferred by the transcarboxylase to acetyl-CoA to form malonyl-CoA. This is Acetyl-coenzyme A carboxylase carboxyl transferase subunit beta from Marinomonas sp. (strain MWYL1).